The primary structure comprises 258 residues: Pimeloyl-[acyl-carrier protein] methyl ester esterase (258 aa).

One can recognise an AB hydrolase-1 domain in the interval 16–242 (LVLLHGWGLN…AAHAPFISHP (227 aa)). Substrate contacts are provided by residues W22, 82 to 83 (SM), and 143 to 147 (FLALQ). Residue S82 is the Nucleophile of the active site. Catalysis depends on residues D207 and H235. H235 provides a ligand contact to substrate.

This sequence belongs to the AB hydrolase superfamily. Carboxylesterase BioH family. Monomer.

It is found in the cytoplasm. It catalyses the reaction 6-carboxyhexanoyl-[ACP] methyl ester + H2O = 6-carboxyhexanoyl-[ACP] + methanol + H(+). It functions in the pathway cofactor biosynthesis; biotin biosynthesis. Its function is as follows. The physiological role of BioH is to remove the methyl group introduced by BioC when the pimeloyl moiety is complete. It allows to synthesize pimeloyl-ACP via the fatty acid synthetic pathway through the hydrolysis of the ester bonds of pimeloyl-ACP esters. This Yersinia pseudotuberculosis serotype IB (strain PB1/+) protein is Pimeloyl-[acyl-carrier protein] methyl ester esterase.